The sequence spans 1142 residues: Ribonucleoside-diphosphate reductase large subunit (1142 aa).

Residues 1-33 form a disordered region; sequence MANRPAASALAGARSPSERQEPREPEVAPPGGD. A compositionally biased stretch (basic and acidic residues) spans 16 to 26; the sequence is PSERQEPREPE. Residues 55–75 carry the RIP homotypic interaction motif (RHIM) motif; that stretch reads AYRISDSSFVQCGSNCSMIID. Positions 118 to 322 are disordered; the sequence is SGPSATTSVG…TDPGYPVPLE (205 aa). Over residues 119-132 the composition is skewed to polar residues; it reads GPSATTSVGTQTSG. The segment covering 141-159 has biased composition (pro residues); the sequence is TPEPQGPQAVPPPPPPPFP. Positions 164 to 179 are enriched in basic and acidic residues; sequence CCARRDARGGAEKDVG. The segment covering 192–205 has biased composition (acidic residues); it reads SETEDSDSSDEDTG. Residues 277–303 show a composition bias toward low complexity; the sequence is GSATDPRASADSDSAAHAAAPQADVAP. The interval 294 to 400 is alpha-crystallin domain; the sequence is AAAPQADVAP…CLDLPPVPPN (107 aa). Substrate-binding positions include T571, 586–587, G617, 796–800, and 973–977; these read SC, NLCTE, and PTAAS. C587 and C813 are oxidised to a cystine. N796 (proton acceptor) is an active-site residue. The active-site Cysteine radical intermediate is C798. Catalysis depends on E800, which acts as the Proton acceptor.

The protein belongs to the ribonucleoside diphosphate reductase large chain family. Heterotetramer composed of a homodimer of the large subunit (R1) and a homodimer of the small subunit (R2). Larger multisubunit protein complex are also active, composed of (R1)n(R2)n. May self-assemble (via RIP homotypic interaction motif/RHIM) into homomeric fibrillar amyloid structures. Interacts (via RHIM) with human RIPK1 (via RHIM). Interacts (via RHIM) with human RIPK3 (via RHIM). May interact (via RHIM) with human ZBP1 (via RHIM). Interacts (via C-terminus) with host CASP8.

The protein localises to the host cell membrane. Its subcellular location is the host endosome membrane. The enzyme catalyses a 2'-deoxyribonucleoside 5'-diphosphate + [thioredoxin]-disulfide + H2O = a ribonucleoside 5'-diphosphate + [thioredoxin]-dithiol. In terms of biological role, ribonucleoside-diphosphate reductase holoenzyme that provides the precursors necessary for viral DNA synthesis. Allows virus growth in non-dividing cells, as well as reactivation from latency in infected hosts. Catalyzes the biosynthesis of deoxyribonucleotides from the corresponding ribonucleotides. The N-terminal region confers antiapoptotic activity in differentiated cells such as neurons and is important for viral reactivation to increase neural survivability. Prevents host necroptosis by targeting host RIPK1 and RIPK3, thereby hampering the formation of necroptotic RIPK1-RIPK3 complexes. May form hetero-amyloid structures with host proteins RIPK3 or ZBP1, thereby preventing RIPK3- and ZBP1-mediated necroptosis. In addition, inhibits extrinsic apoptosis by targeting host CASP8. This Homo sapiens (Human) protein is Ribonucleoside-diphosphate reductase large subunit.